We begin with the raw amino-acid sequence, 374 residues long: Lipid-A-disaccharide synthase (374 aa).

Belongs to the LpxB family.

The catalysed reaction is a lipid X + a UDP-2-N,3-O-bis[(3R)-3-hydroxyacyl]-alpha-D-glucosamine = a lipid A disaccharide + UDP + H(+). It functions in the pathway bacterial outer membrane biogenesis; LPS lipid A biosynthesis. Its function is as follows. Condensation of UDP-2,3-diacylglucosamine and 2,3-diacylglucosamine-1-phosphate to form lipid A disaccharide, a precursor of lipid A, a phosphorylated glycolipid that anchors the lipopolysaccharide to the outer membrane of the cell. In Pseudomonas fluorescens (strain ATCC BAA-477 / NRRL B-23932 / Pf-5), this protein is Lipid-A-disaccharide synthase.